A 531-amino-acid chain; its full sequence is Dimethylnonatriene synthase (531 aa).

Residues 6–26 form a helical membrane-spanning segment; that stretch reads TMSVAMALAAAIFVVLCSVVA. Cys-464 lines the heme pocket.

It belongs to the cytochrome P450 family. Requires heme as cofactor.

The protein resides in the membrane. The enzyme catalyses (6E,10E)-geranyllinalool + reduced [NADPH--hemoprotein reductase] + O2 = (3E,7E)-4,8,12-trimethyltrideca 1,3,7,11-tetraene + but-3-en-2-one + oxidized [NADPH--hemoprotein reductase] + 2 H2O + H(+). It carries out the reaction (3S,6E)-nerolidol + reduced [NADPH--hemoprotein reductase] + O2 = (3E)-4,8-dimethylnona-1,3,7-triene + but-3-en-2-one + oxidized [NADPH--hemoprotein reductase] + 2 H2O + H(+). It participates in secondary metabolite biosynthesis; terpenoid biosynthesis. Its function is as follows. Involved in the biosynthesis of homoterpenes, attractants of herbivores parasitoids and predators (e.g. predatory mites and parasitoid wasps). Component of the volatile terpenes biosynthesis pathways. Converts mainly nerolidol to dimethylnonatriene (DMNT) and, to a lower extent, geranyllinalool to trimethyltridecatetraene (TMTT). This is Dimethylnonatriene synthase from Zea mays (Maize).